The sequence spans 447 residues: MIKIKKGLNLPIAGRPEQVIYDGPAITEVALLGEEYVGMRPSMKIKEGEAVKKGQVLFEDKKNPGVVFTAPASGKIAAIHRGEKRVLQSVVIAVEGNDEIEFERYVPEALAKLSSEKVRRNLIQSGLWTALRTRPFSKIPAVDAEPFAIFVNAMDTNPLAADPTVIIKEAAEDFKRGLLVLSRLTERKIHVCKAAGADVPSENAANIETHEFGGPHPAGLSGTHIHFIEPVGANKTVWTINYQDVIAIGRLFVTGRLNTERVVALGGLQVNKPRLLRTVLGAKVSQLTAGELVDADNRVISGSVLNGAIAQGAHDYLGRYHNQISVIEEGRSKELFGWVAPQPDKYSITRTTLGHFLKNKLFKFTTAVNGGDRAMVPIGTYERVMPLDILPTLLLRDLIVGDTDSAQALGCLELDEEDLALCSFVCPGKYEYGPLLRKVLETIEKEG.

Belongs to the NqrA family. In terms of assembly, composed of six subunits; NqrA, NqrB, NqrC, NqrD, NqrE and NqrF.

It carries out the reaction a ubiquinone + n Na(+)(in) + NADH + H(+) = a ubiquinol + n Na(+)(out) + NAD(+). In terms of biological role, NQR complex catalyzes the reduction of ubiquinone-1 to ubiquinol by two successive reactions, coupled with the transport of Na(+) ions from the cytoplasm to the periplasm. NqrA to NqrE are probably involved in the second step, the conversion of ubisemiquinone to ubiquinol. This chain is Na(+)-translocating NADH-quinone reductase subunit A, found in Neisseria gonorrhoeae (strain ATCC 700825 / FA 1090).